We begin with the raw amino-acid sequence, 516 residues long: Putative F-box and FNIP repeat-containing protein L414 (516 aa).

Positions 4 to 49 (INDLNMDVILHLLTFLTDKNKLNFMMTCTHLYQFISCVKYNNFQLF) constitute an F-box domain. 5 FNIP repeats span residues 123–165 (FNHT…FGEN), 166–208 (FNKM…LMYS), 341–383 (YNPK…NFNG), 385–428 (YDNI…FGKL), and 429–470 (YNKP…FGYM).

In Acanthamoeba polyphaga (Amoeba), this protein is Putative F-box and FNIP repeat-containing protein L414.